The sequence spans 66 residues: Gallinacin-5 (66 aa).

The first 19 residues, 1–19 (MQILTLLFAVLLLMLRAEP), serve as a signal peptide directing secretion. Positions 20 to 25 (GLSLAR) are excised as a propeptide. Intrachain disulfides connect C31-C59, C38-C53, and C43-C60.

It belongs to the beta-defensin family. As to expression, strong expression in the tongue and bone marrow. Low expression in the esophagus, trachea, lung, brain and ovary. Expressed in the ovarian stroma, but not in the ovarian follicles.

It is found in the secreted. Its subcellular location is the cytoplasmic granule. Has bactericidal activity. The polypeptide is Gallinacin-5 (GAL5) (Gallus gallus (Chicken)).